Here is a 1225-residue protein sequence, read N- to C-terminus: Clustered mitochondria protein homolog (1225 aa).

Residues 1–22 (MAQTNGEMEHSKESPEQITNGN) are disordered. Residues 281-532 (QESNNQKDLL…RVTPLDVAWN (252 aa)) enclose the Clu domain. Disordered regions lie at residues 577–605 (EEAAKKEKSSEDTESKEEGSEEKSEEALD) and 846–878 (ANGVNGTGQDEGSKKKKKNKNGDSGSPARSAAA). TPR repeat units lie at residues 949 to 982 (AKLYHQLSMLYYQTDEKDAAVELARKAVIVTERT), 991 to 1024 (ILSYLNLSLFEHASGNTKVALAYIKHAMDLWKII), and 1033 to 1066 (ITTMNNAAVMLQHLKQYSDSRKWFEASLSVCESL). The span at 1153-1184 (RTTLGTQIQPQVGQSTADVSAPSQASNSSIDS) shows a compositional bias: polar residues. The tract at residues 1153 to 1225 (RTTLGTQIQP…KLRGSKKSSA (73 aa)) is disordered.

The protein belongs to the CLU family. May associate with the eukaryotic translation initiation factor 3 (eIF-3) complex.

The protein resides in the cytoplasm. MRNA-binding protein involved in proper cytoplasmic distribution of mitochondria. The polypeptide is Clustered mitochondria protein homolog (Emericella nidulans (strain FGSC A4 / ATCC 38163 / CBS 112.46 / NRRL 194 / M139) (Aspergillus nidulans)).